The primary structure comprises 417 residues: MQKLVIHGGSKLHGEISISGAKNAALPVLCASLLTAEPFAIQNIPHLRDVTTMLALLEQIGVRILTNEPGTTELSAANITNPTASYDMVKTMRAAILVLGPLLARTGQAHISLPGGCAIGMRPVDQHIKGLQAMGAEINIEQGYILAQVGRLSGARIAMDVVTVTGTENLMMAATLASGTTILENAAREPEVIDLANCLIGMGAKIEGAGNDIIIIEGVDRLHGGSHVVMPDRIETGTFLTAVAACGGDVTLIGTRADTLDVVLGKLAEAGADIDIGGDWIRLCMQQRPQPVSLRTAPYPAFPTDMQAQFMALNSIAGGTSIMTETIFENRFMHVQELTRLNADIQVEGNTAIVHGIPQLDGASVMATDLRASACLIIAGLIAQGETIVDRIYHLDRGYEQIEQKLAQVGAHIKRIN.

22–23 (KN) serves as a coordination point for phosphoenolpyruvate. Residue R93 coordinates UDP-N-acetyl-alpha-D-glucosamine. The active-site Proton donor is the C117. Position 117 is a 2-(S-cysteinyl)pyruvic acid O-phosphothioketal (C117). Residues 122–126 (RPVDQ), D305, and I327 each bind UDP-N-acetyl-alpha-D-glucosamine.

It belongs to the EPSP synthase family. MurA subfamily.

The protein localises to the cytoplasm. It carries out the reaction phosphoenolpyruvate + UDP-N-acetyl-alpha-D-glucosamine = UDP-N-acetyl-3-O-(1-carboxyvinyl)-alpha-D-glucosamine + phosphate. Its pathway is cell wall biogenesis; peptidoglycan biosynthesis. In terms of biological role, cell wall formation. Adds enolpyruvyl to UDP-N-acetylglucosamine. The protein is UDP-N-acetylglucosamine 1-carboxyvinyltransferase of Nitrosomonas eutropha (strain DSM 101675 / C91 / Nm57).